The sequence spans 238 residues: 1-(5-phosphoribosyl)-5-[(5-phosphoribosylamino)methylideneamino] imidazole-4-carboxamide isomerase (238 aa).

Aspartate 8 (proton acceptor) is an active-site residue. The Proton donor role is filled by aspartate 130.

It belongs to the HisA/HisF family.

The protein localises to the cytoplasm. It carries out the reaction 1-(5-phospho-beta-D-ribosyl)-5-[(5-phospho-beta-D-ribosylamino)methylideneamino]imidazole-4-carboxamide = 5-[(5-phospho-1-deoxy-D-ribulos-1-ylimino)methylamino]-1-(5-phospho-beta-D-ribosyl)imidazole-4-carboxamide. It participates in amino-acid biosynthesis; L-histidine biosynthesis; L-histidine from 5-phospho-alpha-D-ribose 1-diphosphate: step 4/9. The sequence is that of 1-(5-phosphoribosyl)-5-[(5-phosphoribosylamino)methylideneamino] imidazole-4-carboxamide isomerase from Methanococcus maripaludis (strain C7 / ATCC BAA-1331).